The following is a 244-amino-acid chain: uncharacterized protein (244 aa).

6 helical membrane passes run 5–27, 37–59, 87–106, 116–138, 159–181, and 196–218; these read KFALLFTFAACFAVIVFFWLLAV, IVMVLLISPIFAILLAFNLSRFL, LVFIHLMPIAFLGALIFYYG, LSLFALIFALSPLLFLGISFFVA, FWIWIHLFVILLIIISKVLVQPS, and GVFNLLIIATMNAIFGVTGRMVA.

Its subcellular location is the cell membrane. This is an uncharacterized protein from Archaeoglobus fulgidus (strain ATCC 49558 / DSM 4304 / JCM 9628 / NBRC 100126 / VC-16).